Consider the following 475-residue polypeptide: Sulfate adenylyltransferase subunit 1 (475 aa).

The 215-residue stretch at 25–239 (KSLLRFLTCG…EVLETVEIQR (215 aa)) folds into the tr-type G domain. The interval 34–41 (GSVDDGKS) is G1. GTP is bound at residue 34-41 (GSVDDGKS). The interval 92–96 (GITID) is G2. A G3 region spans residues 113-116 (DTPG). GTP is bound by residues 113-117 (DTPGH) and 168-171 (NKMD). Residues 168 to 171 (NKMD) form a G4 region. Residues 206 to 208 (SAL) are G5.

This sequence belongs to the TRAFAC class translation factor GTPase superfamily. Classic translation factor GTPase family. CysN/NodQ subfamily. Heterodimer composed of CysD, the smaller subunit, and CysN.

It carries out the reaction sulfate + ATP + H(+) = adenosine 5'-phosphosulfate + diphosphate. Its pathway is sulfur metabolism; hydrogen sulfide biosynthesis; sulfite from sulfate: step 1/3. With CysD forms the ATP sulfurylase (ATPS) that catalyzes the adenylation of sulfate producing adenosine 5'-phosphosulfate (APS) and diphosphate, the first enzymatic step in sulfur assimilation pathway. APS synthesis involves the formation of a high-energy phosphoric-sulfuric acid anhydride bond driven by GTP hydrolysis by CysN coupled to ATP hydrolysis by CysD. This chain is Sulfate adenylyltransferase subunit 1, found in Escherichia fergusonii (strain ATCC 35469 / DSM 13698 / CCUG 18766 / IAM 14443 / JCM 21226 / LMG 7866 / NBRC 102419 / NCTC 12128 / CDC 0568-73).